The chain runs to 193 residues: dCTP deaminase (193 aa).

DCTP-binding positions include 110 to 115, D128, 136 to 138, Y171, K178, and Q182; these read RSSLAR and VLE. The Proton donor/acceptor role is filled by E138.

This sequence belongs to the dCTP deaminase family. Homotrimer.

It carries out the reaction dCTP + H2O + H(+) = dUTP + NH4(+). The protein operates within pyrimidine metabolism; dUMP biosynthesis; dUMP from dCTP (dUTP route): step 1/2. Catalyzes the deamination of dCTP to dUTP. The chain is dCTP deaminase from Escherichia coli (strain K12 / MC4100 / BW2952).